An 897-amino-acid polypeptide reads, in one-letter code: DNA endonuclease RBBP8 (897 aa).

An essential for binding to the MRN complex and for RPA focus formation on DNA damage region spans residues Asp-22 to Leu-45. A coiled-coil region spans residues Val-35–Leu-84. Residues Leu-45–Ile-160 form a required for interaction with LMO4, probably by stabilizing the interaction through RPPB8 dimerization region. Residues Lys-62 and Lys-115 each participate in a glycyl lysine isopeptide (Lys-Gly) (interchain with G-Cter in SUMO2) cross-link. The stretch at Ile-117–Leu-138 forms a coiled coil. Lys-193 is covalently cross-linked (Glycyl lysine isopeptide (Lys-Gly) (interchain with G-Cter in SUMO2)). Residues Ser-233 and Ser-276 each carry the phosphoserine modification. A compositionally biased stretch (basic and acidic residues) spans Lys-292–Arg-307. The segment at Lys-292 to Val-325 is disordered. Residue Thr-315 is modified to Phosphothreonine; by CDK2. A phosphoserine mark is found at Ser-326, Ser-327, and Ser-349. Glycyl lysine isopeptide (Lys-Gly) (interchain with G-Cter in SUMO2) cross-links involve residues Lys-360 and Lys-378. The residue at position 379 (Ser-379) is a Phosphoserine. Glycyl lysine isopeptide (Lys-Gly) (interchain with G-Cter in SUMO2) cross-links involve residues Lys-396, Lys-404, and Lys-410. Positions Gln-419 to Ser-464 are disordered. Basic and acidic residues predominate over residues Asn-420 to Pro-436. Glycyl lysine isopeptide (Lys-Gly) (interchain with G-Cter in SUMO2) cross-links involve residues Lys-438 and Lys-449. Residues Pro-490–Ser-494 carry the PXDLS motif motif. Positions Ser-509–Glu-557 are damage-recruitment motif. Lys-526 is covalently cross-linked (Glycyl lysine isopeptide (Lys-Gly) (interchain with G-Cter in SUMO2); alternate). Glycyl lysine isopeptide (Lys-Gly) (interchain with G-Cter in SUMO2) cross-links involve residues Lys-530, Lys-572, and Lys-578. Residue Lys-604 forms a Glycyl lysine isopeptide (Lys-Gly) (interchain with G-Cter in SUMO2); alternate linkage. Residues Lys-613, Lys-638, and Lys-640 each participate in a glycyl lysine isopeptide (Lys-Gly) (interchain with G-Cter in SUMO2) cross-link. The tract at residues Ser-641–Gly-685 is required for interaction with LMO4, probably by making physical contact with LMO4. Residue Ser-664 is modified to Phosphoserine; by ATM. Residue Lys-676 forms a Glycyl lysine isopeptide (Lys-Gly) (interchain with G-Cter in SUMO2) linkage. Phosphoserine is present on Ser-679. A disordered region spans residues Lys-704 to Ser-723. Lys-719 is covalently cross-linked (Glycyl lysine isopeptide (Lys-Gly) (interchain with G-Cter in SUMO2)). The residue at position 723 (Ser-723) is a Phosphoserine. The residue at position 745 (Ser-745) is a Phosphoserine; by ATM. Lys-782 participates in a covalent cross-link: Glycyl lysine isopeptide (Lys-Gly) (interchain with G-Cter in SUMO2). Positions Phe-840 to Tyr-842 match the KLHL15-binding motif. Thr-847 bears the Phosphothreonine; by CDK1 mark. Thr-859 is modified (phosphothreonine; by ATR). Residue Lys-869 forms a Glycyl lysine isopeptide (Lys-Gly) (interchain with G-Cter in SUMO2) linkage. Positions Asp-873–Thr-897 are disordered.

It belongs to the COM1/SAE2/CtIP family. In terms of assembly, homotetramer; formed by antiparallel association of helical extensions protruding from the N-termini of two parallel coiled-coil dimers. Forms a dumbbell-shaped particle in which polar globular domains are held about 30 nm apart by a central rod. Homotetramerization is required for DNA-end resection and repair. Interacts (via the PXDLS motif) with CTBP1; the interaction is disrupted via binding of the adenovirus E1A to CTBP1. Component of the BRCA1-RBBP8 complex. Interacts (the Ser-327 phosphorylated form) with BRCA1 (via the C-terminal BRCT domains): the interaction occurs in the G2 phase, ubiquitinates RBBP8 and involves RBBP8 in BRCA1-dependent G2/M checkpoint control on DNA damage. Interacts with RB1. Interacts with the MRN complex; interacts directly with MRE11; the interaction is required for efficient homologous recombination (HR) and regulation of the MRN complex. Interacts directly with RAD50. Interacts (when phosphorylated by CDK1) with NBN; promoting association with the MRN complex. Interacts with LM04 (via the LIM zinc-binding 1 domain). Interacts with SIAH1. Interacts with RNF138. Interacts with EXD2. Interacts with CUL3 and KLHL15; this interaction leads to RBBP8 proteasomal degradation. Directly interacts with PIN1; this interaction depends upon RBBP8 phosphorylation, predominantly at Thr-315. Interacts with FZR1; this interaction leads to APC/C-mediated RBBP8 proteasomal degradation. Interacts with AUNIP; leading to recruitment of RBBP8 to sites of DNA damage. Interacts with SAMHD1. Interacts with HDGFL2. In terms of processing, hyperphosphorylation upon ionizing radiation results in dissociation from BRCA1. Phosphorylation at Thr-847 by CDK1 is essential for the recruitment to DNA and the DNA repair function. Phosphorylation at Thr-847 and Thr-859 promote interaction with NBN and recruitment to double-strand breaks (DSBs). Phosphorylated on Ser-327 as cells enter G2 phase. This phosphorylation is required for binding BRCA1 and for the G2/M DNA damage transition checkpoint control. Phosphorylation at Thr-315, probably catalyzed by CDK2, is required for PIN1-binding, while phosphorylation at Ser-276 serves as a PIN1 isomerization site. Phosphorylation at Thr-315 is cell-cycle dependent. It steadily increases during S phase, peaks at late S/G2 phase, and drops at G1. Phosphorylation is not required for tetramerization. Binds to DNA more strongly when dephosphorylated. Ubiquitinated. Ubiquitination at multiple sites by BRCA1 (via its N-terminal RING domain) does not lead to its proteasomal degradation but instead the ubiquitinated RBBP8 binds to chromatin following DNA damage and may play a role in G2/M checkpoint control. Ubiquitinated by RNF138 at its N-terminus. Ubiquitinated through 'Lys-48' by the E3 CUL3-KLHL15 complex; this modification leads to proteasomal degradation. Ubiquitinated by the E3 FZR1/APC/C complex; this modification leads to proteasomal degradation. Expressed in ER-positive breast cancer lines, but tends to be down-regulated ER-negative cells (at protein level).

The protein resides in the nucleus. It localises to the chromosome. Its function is as follows. Endonuclease that cooperates with the MRE11-RAD50-NBN (MRN) complex in DNA-end resection, the first step of double-strand break (DSB) repair through the homologous recombination (HR) pathway. HR is restricted to S and G2 phases of the cell cycle and preferentially repairs DSBs resulting from replication fork collapse. Key determinant of DSB repair pathway choice, as it commits cells to HR by preventing classical non-homologous end-joining (NHEJ). Specifically promotes the endonuclease activity of the MRN complex to clear DNA ends containing protein adducts: recruited to DSBs by NBN following phosphorylation by CDK1, and promotes the endonuclease activity of MRE11 to clear protein-DNA adducts and generate clean double-strand break ends. Functions downstream of the MRN complex and ATM, promotes ATR activation and its recruitment to DSBs in the S/G2 phase facilitating the generation of ssDNA. Component of the BRCA1-RBBP8 complex that regulates CHEK1 activation and controls cell cycle G2/M checkpoints on DNA damage. During immunoglobulin heavy chain class-switch recombination, promotes microhomology-mediated alternative end joining (A-NHEJ) and plays an essential role in chromosomal translocations. Binds preferentially to DNA Y-junctions and to DNA substrates with blocked ends and promotes intermolecular DNA bridging. This chain is DNA endonuclease RBBP8 (RBBP8), found in Homo sapiens (Human).